Consider the following 863-residue polypeptide: Oleate activated transcription factor 3 (863 aa).

A DNA-binding region (zn(2)-C6 fungal-type) is located at residues 19-47; it reads CTNCKKRKSKCDRTKPCGTCVRLGDVDSC. Positions 52–63 are enriched in polar residues; it reads DSSGQPESSPSL. A disordered region spans residues 52–81; the sequence is DSSGQPESSPSLNDADPLRKQSTPAERISP.

The protein belongs to the OAF3 family.

It localises to the cytoplasm. Its subcellular location is the nucleus. The protein localises to the mitochondrion. Its function is as follows. Transcriptional inhibitor with a significantly increased number of target genes in response to oleate. The protein is Oleate activated transcription factor 3 (OAF3) of Saccharomyces cerevisiae (strain RM11-1a) (Baker's yeast).